Consider the following 773-residue polypeptide: Ethylene receptor 2 (773 aa).

The next 4 membrane-spanning stretches (helical) occupy residues 4 to 24, 53 to 73, 82 to 102, and 122 to 142; these read EIASWLLILSMVVFVSPVLAI, VSDFLIAVAYFSIPIELLYFV, WVLFEFIAFIVLCGMTHLLHG, and LTALVSCATAITLITLIPLLL. Positions 94 and 98 each coordinate Cu cation. One can recognise a GAF domain in the interval 187 to 331; the sequence is DRHTILYTTL…VVADQVTVAL (145 aa). The region spanning 374–614 is the Histidine kinase domain; that stretch reads TMSEGMRRPM…PETMSLLLRF (241 aa). The Response regulatory domain maps to 647-766; it reads QVLLVDTNDS…AMESELRRVL (120 aa). The residue at position 702 (D702) is a 4-aspartylphosphate. K751 is covalently cross-linked (Glycyl lysine isopeptide (Lys-Gly) (interchain with G-Cter in ubiquitin)).

Belongs to the ethylene receptor family. As to quaternary structure, heteromer with ETR1. Binds to MRF3/ECIP1. It depends on Cu cation as a cofactor. In terms of processing, autophosphorylated predominantly on Ser residues. In terms of tissue distribution, expressed in seedlings, roots, leaves, flowers, mature siliques, shoot apical meristems, leaf primordia, inflorescence meristems, young floral meristems, developing petals, carpels and ovules. Low expression in stamens.

It localises to the endoplasmic reticulum membrane. Ethylene receptor related to bacterial two-component regulators. Acts as a redundant negative regulator of ethylene signaling. In Arabidopsis thaliana (Mouse-ear cress), this protein is Ethylene receptor 2.